The sequence spans 178 residues: Major non-capsid protein (178 aa).

The protein belongs to the tenuiviruses NCP family.

Its subcellular location is the host cytoplasm. Induces the formation of large intracellular inclusion body, organized in amorphous and crystalline arrays. Presumably the main cause of the stripe disease observed in host. The protein is Major non-capsid protein of Avena sativa (Oat).